The following is an 85-amino-acid chain: Small ribosomal subunit protein uS17 (85 aa).

Belongs to the universal ribosomal protein uS17 family. In terms of assembly, part of the 30S ribosomal subunit.

Functionally, one of the primary rRNA binding proteins, it binds specifically to the 5'-end of 16S ribosomal RNA. The chain is Small ribosomal subunit protein uS17 from Geobacter sulfurreducens (strain ATCC 51573 / DSM 12127 / PCA).